A 274-amino-acid polypeptide reads, in one-letter code: Rhamnulose-1-phosphate aldolase (274 aa).

Residue Glu-117 is part of the active site. His-141, His-143, and His-212 together coordinate Zn(2+).

The protein belongs to the aldolase class II family. RhaD subfamily. As to quaternary structure, homotetramer. The cofactor is Zn(2+).

The protein resides in the cytoplasm. It catalyses the reaction L-rhamnulose 1-phosphate = (S)-lactaldehyde + dihydroxyacetone phosphate. It participates in carbohydrate degradation; L-rhamnose degradation; glycerone phosphate from L-rhamnose: step 3/3. Its function is as follows. Catalyzes the reversible cleavage of L-rhamnulose-1-phosphate to dihydroxyacetone phosphate (DHAP) and L-lactaldehyde. The chain is Rhamnulose-1-phosphate aldolase from Escherichia coli O17:K52:H18 (strain UMN026 / ExPEC).